The primary structure comprises 309 residues: Probable ABC transporter permease protein y4oQ (309 aa).

7 helical membrane passes run 25-45 (VVWF…VPLV), 89-109 (LIYA…FAVL), 123-143 (LMLI…KLLY), 174-194 (VIIV…LAGL), 221-241 (LPHL…GVMA), 246-266 (IFLL…VYAY), and 278-298 (TTAI…PLIW). The ABC transmembrane type-1 domain occupies 85–296 (IRVTLIYAVV…VFVLAISAPL (212 aa)).

It belongs to the binding-protein-dependent transport system permease family. MalFG subfamily.

It localises to the cell inner membrane. Functionally, probably part of the binding-protein-dependent transport system y4oPQRS. This system probably transports a sugar-like molecule. Probably responsible for the translocation of the substrate across the membrane. The protein is Probable ABC transporter permease protein y4oQ of Sinorhizobium fredii (strain NBRC 101917 / NGR234).